The following is a 196-amino-acid chain: NADH-quinone oxidoreductase subunit B (196 aa).

Cys75, Cys76, Cys140, and Cys170 together coordinate [4Fe-4S] cluster.

Belongs to the complex I 20 kDa subunit family. As to quaternary structure, NDH-1 is composed of 14 different subunits. Subunits NuoB, C, D, E, F, and G constitute the peripheral sector of the complex. It depends on [4Fe-4S] cluster as a cofactor.

Its subcellular location is the cell inner membrane. The catalysed reaction is a quinone + NADH + 5 H(+)(in) = a quinol + NAD(+) + 4 H(+)(out). Functionally, NDH-1 shuttles electrons from NADH, via FMN and iron-sulfur (Fe-S) centers, to quinones in the respiratory chain. Couples the redox reaction to proton translocation (for every two electrons transferred, four hydrogen ions are translocated across the cytoplasmic membrane), and thus conserves the redox energy in a proton gradient. This is NADH-quinone oxidoreductase subunit B from Caulobacter sp. (strain K31).